Reading from the N-terminus, the 505-residue chain is Acetyl-coenzyme A carboxylase carboxyl transferase subunit beta, chloroplastic (505 aa).

The span at E189–G205 shows a compositional bias: low complexity. The interval E189–R213 is disordered. Residues L228–S499 form the CoA carboxyltransferase N-terminal domain. Positions 232, 235, 251, and 254 each coordinate Zn(2+). The C4-type zinc-finger motif lies at C232–C254.

It belongs to the AccD/PCCB family. Acetyl-CoA carboxylase is a heterohexamer composed of biotin carboxyl carrier protein, biotin carboxylase and 2 subunits each of ACCase subunit alpha and ACCase plastid-coded subunit beta (accD). The cofactor is Zn(2+).

The protein localises to the plastid. Its subcellular location is the chloroplast stroma. It carries out the reaction N(6)-carboxybiotinyl-L-lysyl-[protein] + acetyl-CoA = N(6)-biotinyl-L-lysyl-[protein] + malonyl-CoA. The protein operates within lipid metabolism; malonyl-CoA biosynthesis; malonyl-CoA from acetyl-CoA: step 1/1. Functionally, component of the acetyl coenzyme A carboxylase (ACC) complex. Biotin carboxylase (BC) catalyzes the carboxylation of biotin on its carrier protein (BCCP) and then the CO(2) group is transferred by the transcarboxylase to acetyl-CoA to form malonyl-CoA. This chain is Acetyl-coenzyme A carboxylase carboxyl transferase subunit beta, chloroplastic, found in Calycanthus floridus var. glaucus (Eastern sweetshrub).